Reading from the N-terminus, the 437-residue chain is MNYTTQMDAAKKGIVTKEMEIVAKKENMNVKDLMKLVSKGKVAIPANKNHKSLDPEGIGQGLRTKINVNLGISKDCYNIDMELEKVQKAIDMKAEAIMDLSCFGKTEEFRKRLIDMSPAIIGTVPIYDAVGFYDKELKDITSEEFLKVAEKHAENGADFLTIHVGMNRKTAATFKKNPRRMNIVSRGGSLLYAWMELNNKENPFYEGFDKLLDICEKYDVTLSLGDACRPGCIEDSTDASQIEELIALGELTKRAWERNVQVIIEGPGHMTLDEIETNMKIEKKLCHGAPFYVLGPIVTDIAPGYDHITSAIGGAIAATHGADFLCYVTPAEHLRLPNLDDMKEGIIATKIAAHAADLAKGVKGARDWDNAMAKARRDLDWERMFELSIDEEKARRYREESKAKSKDSCTMCGKMCAVRNMNRVTEGKDLNMLRDDD.

Residues Asn69, Met98, Tyr127, His163, 185–187 (SRG), 226–229 (DACR), and Glu265 each bind substrate. Residue His269 participates in Zn(2+) binding. Tyr292 provides a ligand contact to substrate. His333 is a Zn(2+) binding site. [4Fe-4S] cluster-binding residues include Cys409, Cys412, and Cys416.

The protein belongs to the ThiC family. Requires [4Fe-4S] cluster as cofactor.

It carries out the reaction 5-amino-1-(5-phospho-beta-D-ribosyl)imidazole + S-adenosyl-L-methionine = 4-amino-2-methyl-5-(phosphooxymethyl)pyrimidine + CO + 5'-deoxyadenosine + formate + L-methionine + 3 H(+). Its pathway is cofactor biosynthesis; thiamine diphosphate biosynthesis. Functionally, catalyzes the synthesis of the hydroxymethylpyrimidine phosphate (HMP-P) moiety of thiamine from aminoimidazole ribotide (AIR) in a radical S-adenosyl-L-methionine (SAM)-dependent reaction. The polypeptide is Phosphomethylpyrimidine synthase (Clostridium botulinum (strain Okra / Type B1)).